A 945-amino-acid chain; its full sequence is Oxysterol-binding protein homolog C23H4.01c (945 aa).

The region spanning 1 to 131 (METVEIRSKS…PKTVTFLLTA (131 aa)) is the GOLD domain. Residues 149-243 (KQIISGTLLK…WCNALEKAKN (95 aa)) enclose the PH domain. Phosphoserine occurs at positions 288, 419, and 421. 2 disordered regions span residues 396-555 (ESGA…LPHS) and 846-894 (LEKD…MEEK). The span at 443–454 (TSSISDTSSNSS) shows a compositional bias: low complexity. Residues 460–470 (LNATSLASTVD) are compositionally biased toward polar residues. A compositionally biased stretch (basic and acidic residues) spans 482-499 (ESNKENDIKRKQPFHDLM). At serine 503 the chain carries Phosphoserine.

This sequence belongs to the OSBP family.

Its subcellular location is the cytoplasm. In Schizosaccharomyces pombe (strain 972 / ATCC 24843) (Fission yeast), this protein is Oxysterol-binding protein homolog C23H4.01c.